Here is a 151-residue protein sequence, read N- to C-terminus: Probable desiccation-related protein LEA14 (151 aa).

The protein belongs to the LEA type 2 family.

This chain is Probable desiccation-related protein LEA14 (LEA14), found in Arabidopsis thaliana (Mouse-ear cress).